Reading from the N-terminus, the 90-residue chain is Molybdopterin synthase sulfur carrier subunit (90 aa).

Glycine 90 bears the 1-thioglycine; alternate mark. At glycine 90 the chain carries Glycyl adenylate; alternate.

It belongs to the MoaD family. MOCS2A subfamily. In terms of assembly, heterotetramer; composed of 2 small (Mocs2A) and 2 large (Mocs2B) subunits. C-terminal thiocarboxylation occurs in 2 steps, it is first acyl-adenylated (-COAMP) via the hesA/moeB/thiF part of MOCS3, then thiocarboxylated (-COSH) via the rhodanese domain of MOCS3.

The protein localises to the cytoplasm. It functions in the pathway cofactor biosynthesis; molybdopterin biosynthesis. Its function is as follows. Acts as a sulfur carrier required for molybdopterin biosynthesis. Component of the molybdopterin synthase complex that catalyzes the conversion of precursor Z into molybdopterin by mediating the incorporation of 2 sulfur atoms into precursor Z to generate a dithiolene group. In the complex, serves as sulfur donor by being thiocarboxylated (-COSH) at its C-terminus by MOCS3. After interaction with Mocs2B, the sulfur is then transferred to precursor Z to form molybdopterin. The sequence is that of Molybdopterin synthase sulfur carrier subunit from Drosophila sechellia (Fruit fly).